The sequence spans 775 residues: Meiotic driver SPOK2 (775 aa).

Positions 4–69 (KDRIAQLLRE…RCERERLQLE (66 aa)) form a coiled coil. 4 disordered regions span residues 18 to 51 (KARE…REEE), 211 to 249 (QKDD…YICS), 442 to 525 (LSSA…AMAD), and 734 to 761 (PPPK…AQLF). Polar residues predominate over residues 444 to 457 (SAPSSQNTDISEYT).

It is found in the cytoplasm. It localises to the nucleus. Its function is as follows. Promotes unequal transmission of alleles from the parental zygote to progeny spores by acting as poison/antidote system, leading to poisoning of progeny that do not inherit the allele. May possess DNA nuclease activity that leads to spore killing, and a kinase activity that confers resistance to the nuclease activity. The sequence is that of Meiotic driver SPOK2 from Podospora anserina (strain S / ATCC MYA-4624 / DSM 980 / FGSC 10383) (Pleurage anserina).